An 87-amino-acid chain; its full sequence is Gibberellin-regulated protein 8 (87 aa).

Residues 1–25 form the signal peptide; that stretch reads MKLVVVQFFIISLLLTSSFSVLSSA.

It belongs to the GASA family. Six disulfide bonds may be present. As to expression, expressed in roots and developing seeds.

The protein localises to the secreted. In terms of biological role, gibberellin-regulated protein that may function in hormonal controlled steps of development such as seed germination, flowering and seed maturation. This is Gibberellin-regulated protein 8 from Arabidopsis thaliana (Mouse-ear cress).